Here is a 1025-residue protein sequence, read N- to C-terminus: DNA ligase 4 (1025 aa).

Positions 1-36 (MMQPTPAPSSAPGSPQRTQAEPEMETPSYPQPPQNV) are disordered. ATP contacts are provided by E289, K291, L292, R296, E349, F387, E447, K452, K469, and K471. K291 acts as the N6-AMP-lysine intermediate in catalysis. E349 serves as a coordination point for Mg(2+). E447 provides a ligand contact to Mg(2+). The BRCT 1 domain occupies 667-763 (VKTDIFNGMK…EPAPFKKKYF (97 aa)). The segment at 773 to 904 (ADEYNEDDGE…TTPDVDGDVK (132 aa)) is disordered. Composition is skewed to acidic residues over residues 775–785 (EYNEDDGEEEG) and 806–816 (SETEDEDEEQA). The segment covering 817–838 (PEIKEEQDGELHEWLKVDDRKS) has biased composition (basic and acidic residues). A compositionally biased stretch (acidic residues) spans 845-870 (DEEDSVTEDDSDNADVADEEEPDLDD). Basic and acidic residues predominate over residues 891-904 (RHRETTPDVDGDVK). Positions 915–1025 (DPDVIFKHLC…TLLDEEGESF (111 aa)) constitute a BRCT 2 domain.

The protein belongs to the ATP-dependent DNA ligase family. Mg(2+) serves as cofactor.

It localises to the nucleus. The catalysed reaction is ATP + (deoxyribonucleotide)n-3'-hydroxyl + 5'-phospho-(deoxyribonucleotide)m = (deoxyribonucleotide)n+m + AMP + diphosphate.. Its function is as follows. DNA ligase involved in DNA non-homologous end joining (NHEJ); required for double-strand break (DSB) repair. The chain is DNA ligase 4 (LIG4) from Coprinopsis cinerea (strain Okayama-7 / 130 / ATCC MYA-4618 / FGSC 9003) (Inky cap fungus).